A 121-amino-acid chain; its full sequence is Parathyroid hormone-related protein (121 aa).

Positions 1–14 are cleaved as a signal peptide; the sequence is VGVFLLSYSVPSCG. A propeptide spanning residues 15 to 24 is cleaved from the precursor; sequence RSVEELGRRL. Residues 47–58 form an important for receptor binding region; the sequence is RFFLHHLIAEIH. Residues 61–121 form a disordered region; the sequence is EIRATSEVSP…PGKKKKGKPG (61 aa). Positions 66–80 are enriched in polar residues; sequence SEVSPNSKPAPNTKN. The Nuclear localization signal signature appears at 98-119; sequence TNKVETYKEQPLKTPGKKKKGK. Residues 99–108 are compositionally biased toward basic and acidic residues; the sequence is NKVETYKEQP. Positions 112-121 are enriched in basic residues; sequence PGKKKKGKPG.

Belongs to the parathyroid hormone family. In terms of assembly, PTHrP interacts with PTH1R (via N-terminal extracellular domain).

It is found in the secreted. The protein resides in the cytoplasm. It localises to the nucleus. Neuroendocrine peptide which is a critical regulator of cellular and organ growth, development, migration, differentiation and survival and of epithelial calcium ion transport. Acts by binding to its receptor, PTH1R, activating G protein-coupled receptor signaling. Regulates endochondral bone development and epithelial-mesenchymal interactions during the formation of the mammary glands and teeth. Required for skeletal homeostasis. Promotes mammary mesenchyme differentiation and bud outgrowth by modulating mesenchymal cell responsiveness to BMPs. Up-regulates BMPR1A expression in the mammary mesenchyme and this increases the sensitivity of these cells to BMPs and allows them to respond to BMP4 in a paracrine and/or autocrine fashion. BMP4 signaling in the mesenchyme, in turn, triggers epithelial outgrowth and augments MSX2 expression, which causes the mammary mesenchyme to inhibit hair follicle formation within the nipple sheath. In Ovis aries (Sheep), this protein is Parathyroid hormone-related protein (PTHLH).